Consider the following 62-residue polypeptide: Sperm protamine P1 (62 aa).

A disordered region spans residues Met-1–Arg-46.

Belongs to the protamine P1 family. Testis.

The protein resides in the nucleus. Its subcellular location is the chromosome. In terms of biological role, protamines substitute for histones in the chromatin of sperm during the haploid phase of spermatogenesis. They compact sperm DNA into a highly condensed, stable and inactive complex. The chain is Sperm protamine P1 (PRM1) from Planigale gilesi (Flat-skulled marsupial mouse).